The chain runs to 187 residues: MSHLALKDLFSGFFVIDDEEEVEVPDKQQQVNEAPAKEQSQQTTKQNAIKSVPQKSASRYTTTSEERNNRMSNYSKNNSRNVVTMNNATPNNASQESSKMCLFEPRVFSDTQDIADELKNRRATLVNLQRIDKVSAKRIIDFLSGTVYAIGGDIQRVGTDIFLCTPDNVEVAGSITDHIENMEHSFD.

The segment at 21-97 (EVEVPDKQQQ…ATPNNASQES (77 aa)) is disordered. Polar residues-rich tracts occupy residues 38-63 (EQSQQTTKQNAIKSVPQKSASRYTTT) and 70-97 (RMSNYSKNNSRNVVTMNNATPNNASQES).

The protein belongs to the SepF family. As to quaternary structure, homodimer. Interacts with FtsZ.

The protein localises to the cytoplasm. Functionally, cell division protein that is part of the divisome complex and is recruited early to the Z-ring. Probably stimulates Z-ring formation, perhaps through the cross-linking of FtsZ protofilaments. Its function overlaps with FtsA. This Staphylococcus aureus (strain Mu3 / ATCC 700698) protein is Cell division protein SepF.